Reading from the N-terminus, the 290-residue chain is Bifunctional protein FolD (290 aa).

Residues G174 to S176, I199, and I240 each bind NADP(+).

Belongs to the tetrahydrofolate dehydrogenase/cyclohydrolase family. Homodimer.

The enzyme catalyses (6R)-5,10-methylene-5,6,7,8-tetrahydrofolate + NADP(+) = (6R)-5,10-methenyltetrahydrofolate + NADPH. It catalyses the reaction (6R)-5,10-methenyltetrahydrofolate + H2O = (6R)-10-formyltetrahydrofolate + H(+). It participates in one-carbon metabolism; tetrahydrofolate interconversion. Its function is as follows. Catalyzes the oxidation of 5,10-methylenetetrahydrofolate to 5,10-methenyltetrahydrofolate and then the hydrolysis of 5,10-methenyltetrahydrofolate to 10-formyltetrahydrofolate. The sequence is that of Bifunctional protein FolD from Methanosarcina acetivorans (strain ATCC 35395 / DSM 2834 / JCM 12185 / C2A).